The chain runs to 266 residues: Regulatory protein RecX (266 aa).

This sequence belongs to the RecX family.

It localises to the cytoplasm. In terms of biological role, modulates RecA activity. This is Regulatory protein RecX from Enterococcus faecalis (strain ATCC 700802 / V583).